The sequence spans 233 residues: Biosynthetic peptidoglycan transglycosylase (233 aa).

A helical transmembrane segment spans residues 8–28 (LIALPVGIFIFFNAYVYGNII).

Belongs to the glycosyltransferase 51 family.

It is found in the cell inner membrane. It carries out the reaction [GlcNAc-(1-&gt;4)-Mur2Ac(oyl-L-Ala-gamma-D-Glu-L-Lys-D-Ala-D-Ala)](n)-di-trans,octa-cis-undecaprenyl diphosphate + beta-D-GlcNAc-(1-&gt;4)-Mur2Ac(oyl-L-Ala-gamma-D-Glu-L-Lys-D-Ala-D-Ala)-di-trans,octa-cis-undecaprenyl diphosphate = [GlcNAc-(1-&gt;4)-Mur2Ac(oyl-L-Ala-gamma-D-Glu-L-Lys-D-Ala-D-Ala)](n+1)-di-trans,octa-cis-undecaprenyl diphosphate + di-trans,octa-cis-undecaprenyl diphosphate + H(+). Its pathway is cell wall biogenesis; peptidoglycan biosynthesis. In terms of biological role, peptidoglycan polymerase that catalyzes glycan chain elongation from lipid-linked precursors. This chain is Biosynthetic peptidoglycan transglycosylase, found in Neisseria meningitidis serogroup A / serotype 4A (strain DSM 15465 / Z2491).